The primary structure comprises 158 residues: Major latex protein 22 (158 aa).

This sequence belongs to the MLP family. In terms of tissue distribution, laticifer.

The protein localises to the vacuole. It localises to the cytoplasmic vesicle. In terms of biological role, not known; MLPs constitute up to 50% of the soluble latex protein. This is Major latex protein 22 (MLP22) from Papaver somniferum (Opium poppy).